The chain runs to 104 residues: Small ubiquitin-related modifier 3 (104 aa).

Glycyl lysine isopeptide (Lys-Gly) (interchain with G-Cter in SUMO2) cross-links involve residues Lys5 and Lys7. Lys11 is covalently cross-linked (Glycyl lysine isopeptide (Lys-Gly) (interchain with G-Cter in SUMO); alternate). Residue Lys11 forms a Glycyl lysine isopeptide (Lys-Gly) (interchain with G-Cter in SUMO2); alternate linkage. Residues 15–92 enclose the Ubiquitin-like domain; sequence DHINLKVAGQ…IDVFQQQTGG (78 aa). A Glycyl lysine isopeptide (Gly-Lys) (interchain with K-? in acceptor proteins) cross-link involves residue Gly92. The propeptide occupies 93-104; sequence SRVASCLLGSGL.

The protein belongs to the ubiquitin family. SUMO subfamily. Interacts with SAE2 and UBE2I. Covalently attached to a number of proteins. Interacts with USP25 (via ts SIM domain); the interaction sumoylates USP25 and inhibits its ubiquitin hydrolyzing activity. Interacts with BMAL1. Polymeric chains can be formed through Lys-11 cross-linking. In terms of processing, cleavage of precursor form by SENP1, SENP2 or SENP5 is necessary for function.

The protein localises to the cytoplasm. Its subcellular location is the nucleus. It is found in the PML body. Its function is as follows. Ubiquitin-like protein which can be covalently attached to target lysines either as a monomer or as a lysine-linked polymer. Does not seem to be involved in protein degradation and may function as an antagonist of ubiquitin in the degradation process. Plays a role in a number of cellular processes such as nuclear transport, DNA replication and repair, mitosis and signal transduction. Covalent attachment to its substrates requires prior activation by the E1 complex SAE1-SAE2 and linkage to the E2 enzyme UBE2I, and can be promoted by an E3 ligase such as PIAS1-4, RANBP2 or CBX4. Plays a role in the regulation of sumoylation status of SETX. The protein is Small ubiquitin-related modifier 3 (SUMO3) of Bos taurus (Bovine).